The primary structure comprises 312 residues: Phosphoribosylaminoimidazole-succinocarboxamide synthase (312 aa).

Belongs to the SAICAR synthetase family.

It carries out the reaction 5-amino-1-(5-phospho-D-ribosyl)imidazole-4-carboxylate + L-aspartate + ATP = (2S)-2-[5-amino-1-(5-phospho-beta-D-ribosyl)imidazole-4-carboxamido]succinate + ADP + phosphate + 2 H(+). Its pathway is purine metabolism; IMP biosynthesis via de novo pathway; 5-amino-1-(5-phospho-D-ribosyl)imidazole-4-carboxamide from 5-amino-1-(5-phospho-D-ribosyl)imidazole-4-carboxylate: step 1/2. This is Phosphoribosylaminoimidazole-succinocarboxamide synthase from Legionella pneumophila (strain Paris).